A 179-amino-acid polypeptide reads, in one-letter code: tRNA (cytidine(56)-2'-O)-methyltransferase (179 aa).

Residues leucine 82, 110-114, and 128-135 each bind S-adenosyl-L-methionine; these read GAEKV and VGNQPHSE.

This sequence belongs to the aTrm56 family. In terms of assembly, homodimer.

It localises to the cytoplasm. The enzyme catalyses cytidine(56) in tRNA + S-adenosyl-L-methionine = 2'-O-methylcytidine(56) in tRNA + S-adenosyl-L-homocysteine + H(+). Specifically catalyzes the AdoMet-dependent 2'-O-ribose methylation of cytidine at position 56 in tRNAs. This chain is tRNA (cytidine(56)-2'-O)-methyltransferase, found in Methanocaldococcus jannaschii (strain ATCC 43067 / DSM 2661 / JAL-1 / JCM 10045 / NBRC 100440) (Methanococcus jannaschii).